The sequence spans 432 residues: Small ribosomal subunit protein uS5m (432 aa).

The segment at 110–130 (AGARKGRGKRTKKKKRKDLNR) is disordered. Basic residues predominate over residues 113–127 (RKGRGKRTKKKKRKD). Residues 220–284 (FDTRILEVRN…NRAIHYLHYI (65 aa)) enclose the S5 DRBM domain.

Belongs to the universal ribosomal protein uS5 family. Component of the mitochondrial ribosome small subunit (28S) which comprises a 12S rRNA and about 30 distinct proteins.

It is found in the mitochondrion. The sequence is that of Small ribosomal subunit protein uS5m (Mrps5) from Mus musculus (Mouse).